A 306-amino-acid polypeptide reads, in one-letter code: Ornithine carbamoyltransferase (306 aa).

Carbamoyl phosphate is bound by residues Ser53–Thr56, Gln80, Arg104, and His131–Gln134. L-ornithine contacts are provided by residues Asn162, Asp219, and Ser223 to Met224. Residues Cys259–Leu260 and Arg287 contribute to the carbamoyl phosphate site.

This sequence belongs to the aspartate/ornithine carbamoyltransferase superfamily. OTCase family.

It localises to the cytoplasm. It catalyses the reaction carbamoyl phosphate + L-ornithine = L-citrulline + phosphate + H(+). It functions in the pathway amino-acid biosynthesis; L-arginine biosynthesis; L-arginine from L-ornithine and carbamoyl phosphate: step 1/3. Functionally, reversibly catalyzes the transfer of the carbamoyl group from carbamoyl phosphate (CP) to the N(epsilon) atom of ornithine (ORN) to produce L-citrulline. This chain is Ornithine carbamoyltransferase, found in Psychrobacter sp. (strain PRwf-1).